A 655-amino-acid chain; its full sequence is RalA-binding protein 1-A (655 aa).

The tract at residues Met-1 to Asp-153 is disordered. A compositionally biased stretch (basic and acidic residues) spans Asp-52–His-68. Gly-69 to Lys-74 is a binding site for ATP. Composition is skewed to basic residues over residues Gly-69–Glu-79 and Lys-102–Ser-118. The nuclear localization signal stretch occupies residues Lys-102–Lys-119. Residues Lys-119–Thr-150 are compositionally biased toward basic and acidic residues. Repeat copies occupy residues Glu-133–Lys-137 and Glu-138–Lys-142. The interval Glu-133 to Lys-142 is 2 X 5 AA tandem repeats of E-[D/E]-K-H-K. Positions Leu-149 to Phe-214 are mediates association with membranes and could form transmembrane domains. The Rho-GAP domain maps to Ile-187–Met-383. The tract at residues Arg-398–Met-495 is mediates interaction with RALA and RALB. Ala-413 to Lys-420 is an ATP binding site. Positions Ala-494–Ile-510 are required to maintain nuclear localization. Residues Glu-496–Ile-655 are mediates interaction with REPS1 and REPS2. Disordered regions lie at residues Ile-520–Leu-548 and Leu-600–Ile-655. Acidic residues predominate over residues Glu-532–Leu-548. The segment covering Asn-619–Pro-630 has biased composition (basic and acidic residues).

As to quaternary structure, interacts with the active, GTP-bound form of ralB and ralA.

It is found in the cell membrane. The protein localises to the cytoplasm. Its subcellular location is the cytosol. It localises to the cytoskeleton. The protein resides in the spindle pole. It is found in the nucleus. The protein localises to the mitochondrion. Its subcellular location is the cell projection. It localises to the lamellipodium. The catalysed reaction is an S-substituted glutathione(in) + ATP + H2O = an S-substituted glutathione(out) + ADP + phosphate + H(+). It catalyses the reaction ATP + H2O + xenobioticSide 1 = ADP + phosphate + xenobioticSide 2.. The enzyme catalyses leukotriene C4(in) + ATP + H2O = leukotriene C4(out) + ADP + phosphate + H(+). Multifunctional protein that functions as a downstream effector of ralA and ralB. As a GTPase-activating protein/GAP can inactivate CDC42 and RAC1 by stimulating their GTPase activity. As part of the Ral signaling pathway, may also regulate ligand-dependent EGF and insulin receptors-mediated endocytosis. During mitosis, may act as a scaffold protein in the phosphorylation of EPSIN/EPN1 by the mitotic kinase cyclin B-CDK1, preventing endocytosis during that phase of the cell cycle. During mitosis, also controls mitochondrial fission as an effector of ralA. Recruited to mitochondrion by ralA, acts as a scaffold to foster the mitotic kinase cyclin B-CDK1-mediated phosphorylation and activation of DNM1L. Acts on the cytoskeleton, to regulate pigment distribution and to regulate gastrulation. Functionally, could also function as a primary ATP-dependent active transporter for glutathione conjugates of electrophiles. May also actively catalyze the efflux of a wide range of substrates including xenobiotics like doxorubicin (DOX) contributing to cell multidrug resistance. The protein is RalA-binding protein 1-A (ralbp1-a) of Xenopus laevis (African clawed frog).